We begin with the raw amino-acid sequence, 366 residues long: Class I histocompatibility antigen, Gogo-C*0201 alpha chain (366 aa).

The N-terminal stretch at 1–24 (MRVMAPRTLILPLSGALALTETWA) is a signal peptide. Residues 25 to 114 (GSHSMRYFYT…LRGYYNQSED (90 aa)) are alpha-1. The Extracellular portion of the chain corresponds to 25–308 (GSHSMRYFYT…EPSSQPTIPI (284 aa)). The N-linked (GlcNAc...) asparagine glycan is linked to Asn-110. Residues 115–206 (GSHTLQSMYG…ENGKETLQRA (92 aa)) are alpha-2. Cystine bridges form between Cys-125–Cys-188 and Cys-227–Cys-283. The alpha-3 stretch occupies residues 207–298 (EPPKTHVTHH…GLPEPLTLRW (92 aa)). An Ig-like C1-type domain is found at 209–297 (PKTHVTHHPL…EGLPEPLTLR (89 aa)). A connecting peptide region spans residues 299–308 (EPSSQPTIPI). The chain crosses the membrane as a helical span at residues 309–333 (VGIVVGLAVLVVLAVLGAVVTAMMC). At 334-366 (RRKSSGGKGGSCSQAACSNSAQGSDESLITCKA) the chain is on the cytoplasmic side.

This sequence belongs to the MHC class I family. Heterodimer of an alpha chain and a beta chain (beta-2-microglobulin).

It localises to the membrane. In terms of biological role, involved in the presentation of foreign antigens to the immune system. The protein is Class I histocompatibility antigen, Gogo-C*0201 alpha chain of Gorilla gorilla gorilla (Western lowland gorilla).